A 410-amino-acid polypeptide reads, in one-letter code: Chitin deacetylase 3 (410 aa).

Residues 1–18 (MYGHLSLSTLSLLAVVAA) form the signal peptide. The propeptide occupies 19 to 39 (APFHESWLQPRDSDVSQLFRR). N-linked (GlcNAc...) asparagine glycans are attached at residues N61 and N80. A NodB homology domain is found at 124–314 (KVWALSFDDG…KAVANGWSVK (191 aa)). The active-site Proton acceptor is D131. Acetate is bound at residue D131. D132 serves as a coordination point for Co(2+). A glycan (N-linked (GlcNAc...) asparagine) is linked at N149. H183 and H187 together coordinate Co(2+). Y225 provides a ligand contact to acetate. A glycan (N-linked (GlcNAc...) asparagine) is linked at N279. Residue H289 is the Proton donor of the active site. N293 is a glycosylation site (N-linked (GlcNAc...) asparagine). S385 is lipidated: GPI-anchor amidated serine. The propeptide at 386 to 410 (SSWPIANRPSLFVIACGLALAAIMV) is removed in mature form.

The protein belongs to the polysaccharide deacetylase family. The cofactor is Co(2+).

It is found in the cell membrane. It catalyses the reaction [(1-&gt;4)-N-acetyl-beta-D-glucosaminyl](n) + n H2O = chitosan + n acetate. Functionally, hydrolyzes the N-acetamido groups of N-acetyl-D-glucosamine residues in chitin to form chitosan and acetate. Chitosan is required to anchor melanin to the cell wall, for maintenance of cell wall integrity, and for proper cytokinesis. Chitosan offers an advantage during infection as it is less readily detected than chitin by host immunosurveillance mechanisms. In Cryptococcus neoformans var. neoformans serotype D (strain B-3501A) (Filobasidiella neoformans), this protein is Chitin deacetylase 3.